Here is a 249-residue protein sequence, read N- to C-terminus: 5'-nucleotidase SurE (249 aa).

The a divalent metal cation site is built by D8, D9, S39, and N91.

Belongs to the SurE nucleotidase family. The cofactor is a divalent metal cation.

It localises to the cytoplasm. It carries out the reaction a ribonucleoside 5'-phosphate + H2O = a ribonucleoside + phosphate. Nucleotidase that shows phosphatase activity on nucleoside 5'-monophosphates. This chain is 5'-nucleotidase SurE, found in Pseudomonas aeruginosa (strain LESB58).